The chain runs to 374 residues: N5-carboxyaminoimidazole ribonucleotide synthase (374 aa).

Residues Arg-108, Lys-148, 153-159, 183-186, Glu-191, His-214, and 266-267 each bind ATP; these read GYDGKGQ, EKYL, and NE. Residues 112 to 296 form the ATP-grasp domain; it reads KETLKSAGTK…QFDTHILAVT (185 aa).

Belongs to the PurK/PurT family. Homodimer.

The catalysed reaction is 5-amino-1-(5-phospho-beta-D-ribosyl)imidazole + hydrogencarbonate + ATP = 5-carboxyamino-1-(5-phospho-D-ribosyl)imidazole + ADP + phosphate + 2 H(+). Its pathway is purine metabolism; IMP biosynthesis via de novo pathway; 5-amino-1-(5-phospho-D-ribosyl)imidazole-4-carboxylate from 5-amino-1-(5-phospho-D-ribosyl)imidazole (N5-CAIR route): step 1/2. In terms of biological role, catalyzes the ATP-dependent conversion of 5-aminoimidazole ribonucleotide (AIR) and HCO(3)(-) to N5-carboxyaminoimidazole ribonucleotide (N5-CAIR). In Staphylococcus aureus (strain COL), this protein is N5-carboxyaminoimidazole ribonucleotide synthase.